We begin with the raw amino-acid sequence, 990 residues long: Kinesin-related protein 5 (990 aa).

Positions 6–330 (NIRVMCRFRP…LKFGARAKSI (325 aa)) constitute a Kinesin motor domain. Position 83 to 90 (83 to 90 (GQTGSGKT)) interacts with ATP. Disordered stretches follow at residues 401–485 (QSNS…SSID) and 732–788 (FSSS…QDQQ). Residues 406-418 (SGGGGSGSSGGSS) are compositionally biased toward gly residues. Composition is skewed to low complexity over residues 466–485 (TSSI…SSID) and 733–781 (SSSN…PSSN). Residues 513-948 (IEMEKMKEDT…DQLISTQRLI (436 aa)) are a coiled coil.

It belongs to the TRAFAC class myosin-kinesin ATPase superfamily. Kinesin family. Kinesin subfamily. In terms of assembly, interacts with actin.

It is found in the cytoplasm. It localises to the cytoskeleton. Its function is as follows. Microtubule-associated force-producing protein that plays a role in organelle transport. Its motor activity is directed toward the microtubule's plus end. May connect microtubules to actin filaments. Associates with actin-based structures in cells and is likely involved in the organization of actin cytoskeletons in such structures. The protein is Kinesin-related protein 5 (kif5) of Dictyostelium discoideum (Social amoeba).